Here is a 208-residue protein sequence, read N- to C-terminus: Ribosomal RNA large subunit methyltransferase E (208 aa).

Gly-62, Trp-64, Asp-82, Asp-98, and Asp-123 together coordinate S-adenosyl-L-methionine. The active-site Proton acceptor is the Lys-163.

This sequence belongs to the class I-like SAM-binding methyltransferase superfamily. RNA methyltransferase RlmE family.

The protein resides in the cytoplasm. It catalyses the reaction uridine(2552) in 23S rRNA + S-adenosyl-L-methionine = 2'-O-methyluridine(2552) in 23S rRNA + S-adenosyl-L-homocysteine + H(+). In terms of biological role, specifically methylates the uridine in position 2552 of 23S rRNA at the 2'-O position of the ribose in the fully assembled 50S ribosomal subunit. This is Ribosomal RNA large subunit methyltransferase E from Mannheimia succiniciproducens (strain KCTC 0769BP / MBEL55E).